The sequence spans 101 residues: Vacuolar ATPase assembly integral membrane protein VMA21 (101 aa).

Residues 1–25 (MERPDKAALNALQPPEFRNESSLAS) are Cytoplasmic-facing. Residues 26–46 (TLKTLLFFTALMITVPIGLYF) form a helical membrane-spanning segment. At 47-65 (TTKSYIFEGALGMSNRDSY) the chain is on the lumenal side. The chain crosses the membrane as a helical span at residues 66–86 (FYAAIVAVVAVHVVLALFVYV). Residues 87–101 (AWNEGSRQWREGKQD) are Cytoplasmic-facing.

Belongs to the VMA21 family. Associates with the V0 complex of the vacuolar ATPase (V-ATPase). Interacts with ATP6AP2.

Its subcellular location is the endoplasmic reticulum membrane. It is found in the endoplasmic reticulum-Golgi intermediate compartment membrane. The protein resides in the cytoplasmic vesicle. It localises to the COPII-coated vesicle membrane. In terms of biological role, required for the assembly of the V0 complex of the vacuolar ATPase (V-ATPase) in the endoplasmic reticulum. The protein is Vacuolar ATPase assembly integral membrane protein VMA21 of Homo sapiens (Human).